Reading from the N-terminus, the 94-residue chain is PqqA binding protein (94 aa).

It belongs to the PqqD family. In terms of assembly, monomer. Interacts with PqqE.

It functions in the pathway cofactor biosynthesis; pyrroloquinoline quinone biosynthesis. Functions as a PqqA binding protein and presents PqqA to PqqE, in the pyrroloquinoline quinone (PQQ) biosynthetic pathway. This chain is PqqA binding protein, found in Pseudomonas savastanoi pv. phaseolicola (strain 1448A / Race 6) (Pseudomonas syringae pv. phaseolicola (strain 1448A / Race 6)).